We begin with the raw amino-acid sequence, 2131 residues long: Beta/gamma crystallin domain-containing protein 1 (2131 aa).

Disordered regions lie at residues 1 to 53, 104 to 370, 385 to 674, 688 to 707, and 723 to 743; these read MPLS…LPAP, KSRA…KGHA, TEGA…PVHK, RTNSSPRHTDIRGQRNTPAS, and AKEMEQPEKKVMPNSPQNGVL. Positions 19–35 are enriched in basic residues; the sequence is PPKKHTTFHLWRSKKKQ. Polar residues predominate over residues 135 to 147; sequence RNGLESPTRSNAK. Basic and acidic residues-rich tracts occupy residues 160–169 and 184–194; these read LPERESERSR and GSPRENPREAE. Positions 248 to 265 are enriched in polar residues; that stretch reads ATTTAKQLHSSPGNSSRQ. A compositionally biased stretch (basic residues) spans 414 to 424; the sequence is SGRRSGRRRGS. The span at 479 to 490 shows a compositional bias: low complexity; sequence ASAASPESKPSP. Phosphoserine is present on residues serine 483 and serine 489. Basic and acidic residues-rich tracts occupy residues 536–546 and 562–572; these read PAKESPPKRVP and EAARAIPRELP. Residues 609 to 619 show a composition bias toward low complexity; sequence RAAGAPGASDA. Residues 723–733 are compositionally biased toward basic and acidic residues; that stretch reads AKEMEQPEKKV. Serine 737 and serine 756 each carry phosphoserine. Disordered stretches follow at residues 758-791 and 837-889; these read EEILPATRGMNGDSSENQALGPQPNQDDKADVQT and DIPT…KDTC. Residues 769-782 are compositionally biased toward polar residues; that stretch reads GDSSENQALGPQPN. Residues 864–881 are compositionally biased toward low complexity; that stretch reads SPAESSPGPSLSLSAPAP. Serine 892 carries the phosphoserine modification. 4 disordered regions span residues 926–947, 1041–1101, 1271–1302, and 1316–1348; these read LELGGETTPPLSTERSPEAVGS, QAQS…VFDS, STSQNGSLSQSSVSQPTTEGAPPCGLNKEQSN, and SSSTSHSSLKSPSHMEKYPQKEKTKEDLDSRSN. Threonine 933 is modified (phosphothreonine). The span at 1055–1089 shows a compositional bias: polar residues; it reads SSPTNSPSSGNHLATPQRPDQTVTNGQDSPASLLN. Composition is skewed to low complexity over residues 1091 to 1101, 1271 to 1288, and 1316 to 1327; these read SAGSDDSVFDS, STSQNGSLSQSSVSQPTT, and SSSTSHSSLKSP. Residues 1328–1348 show a composition bias toward basic and acidic residues; it reads SHMEKYPQKEKTKEDLDSRSN. Beta/gamma crystallin 'Greek key' domains lie at 1430 to 1469, 1470 to 1525, 1531 to 1571, 1572 to 1614, 1626 to 1678, 1679 to 1721, 1727 to 1769, 1770 to 1812, 1823 to 1860, 1861 to 1904, 1910 to 1950, and 1951 to 1992; these read GKVVIYSEPDVSEKCIEVFSDIQDCSSWSLSPVILIKVVR, GCWI…RHVV, SHID…KVHW, GTWL…RPLK, PKVV…KVLR, GIWV…RPIL, AHMI…NVLS, GVWV…QPIC, NQIHLFSEPQFQGHSQSFEETTSQIDDSFSTKSCRVSG, GSWV…RFID, PTII…QVIG, and GIWV…RPFV. The Ricin B-type lectin domain maps to 1994 to 2127; sequence KRIYFRLRNK…EKFTQVWEAM (134 aa).

It belongs to the beta/gamma-crystallin family.

Its function is as follows. May function as suppressor of malignant melanoma. It may exert its effects through interactions with the cytoskeleton. The polypeptide is Beta/gamma crystallin domain-containing protein 1 (Homo sapiens (Human)).